The chain runs to 641 residues: Tegument protein UL35 (641 aa).

Disordered stretches follow at residues 353 to 373 (ERGE…PREA), 500 to 572 (ASSS…PRQR), and 587 to 641 (AYSH…LRHL). Residues 358–367 (GDEDEEQEND) are compositionally biased toward acidic residues. Low complexity predominate over residues 500–563 (ASSSSASSSS…LSGSHGISSA (64 aa)). A compositionally biased stretch (basic residues) spans 589 to 599 (SHHRRHRRRRS). Residues 632–641 (DDLAENLRHL) show a composition bias toward basic and acidic residues.

The protein belongs to the herpesviridae pp85 family. In terms of assembly, interacts with UL82. Interacts with isoform UL35A. Interacts with host UBP7; this interaction significantly inhibits the ability of USP7 to form nuclear bodies. Interacts with host DCAF1 (via C-terminus). Interacts with host SNX5; this interaction allows proper gB localization during viral assembly. Interacts with host TBK1; this interaction prevents type I interferon production. Interacts with UL82. Interacts with isoform UL35. Interacts with host UBP7; this interaction significantly inhibits the ability of USP7 to form nuclear bodies. Interacts with host SNX5; this interaction allows proper gB localization during viral assembly.

It is found in the virion tegument. It localises to the host nucleus. The protein localises to the host cytoplasm. Plays important role in immediate-early gene expression through interaction with UL82. Forms nuclear bodies in host nucleus, independently of PML. In turn, UL35 nuclear bodies associate with and remodel PML bodies. Through interaction with host DCAF1, causes cells to accumulate in the G2 phase of the cell cycle by inducing a DNA damage response. Regulates viral assembly by controlling the localization of the essential gB through regulation of a retrograde transport pathway. This modulation occurs via binding and inhibition of host sorting nexin 5/SNX5. Also plays a role in the inhibition of pattern recognition receptor-mediated type I interferon signaling at the level of TBK1. Functionally, promotes cytoplasmic UL82 accumulation and inhibits UL35-containing nuclear bodies formation. Regulates viral assembly by controlling the localization of the essential gB through regulation of a retrograde transport pathway. This modulation occurs via binding and inhibition of host sorting nexin 5/SNX5. The chain is Tegument protein UL35 (UL35) from Homo sapiens (Human).